The following is a 1297-amino-acid chain: Protein Atossa (1297 aa).

2 disordered regions span residues 1–22 and 117–149; these read MIPTSVTNSPPPAGLGQNGASA and TNPYGSMGGSENRAVNGSGSTGSPSSSSLTHQR. Positions 133–144 are enriched in low complexity; sequence GSGSTGSPSSSS. A transactivation domain 1 (TAD1) region spans residues 174–182; that stretch reads VSLAINDLN. Disordered stretches follow at residues 206 to 227, 287 to 311, 518 to 655, 704 to 741, and 1017 to 1048; these read SSAGGGTNNSSAASSPGSNSSD, TPTTTATATASSGASSSASRPKHGP, GLPH…ETQS, SNGTANGSTNGATDDGDDSDTTASEMEETSSCSLSSAD, and AAHKRRSRHLSDRSDRSSLGSDEQLSDEDLES. Low complexity-rich tracts occupy residues 213–226 and 287–305; these read NNSSAASSPGSNSS and TPTTTATATASSGASSSAS. The segment covering 564 to 578 has biased composition (polar residues); sequence SALTPTTTAGGSNCD. The segment covering 605–620 has biased composition (basic residues); sequence QKYRKRMQRRDKKRER. Composition is skewed to low complexity over residues 643-655 and 706-716; these read SQTQSQTTSETQS and GTANGSTNGAT. Positions 717 to 731 are enriched in acidic residues; the sequence is DDGDDSDTTASEMEE. The segment at 1074–1132 is required for macropage invasion; sequence LLGNLEESLLQRRLMPKIEVMGFTLQLGASGGFCPTQVNIPAVSYFYELHGETLSTPYL. The tract at residues 1150–1158 is transactivation domain 2 (TAD2); sequence VQATLLNPI. The segment at 1192–1213 is disordered; sequence SQDQDEGHKVPRSPTVTSTTSK. Low complexity predominate over residues 1203 to 1212; sequence RSPTVTSTTS.

The protein belongs to the ATOS family. As to expression, expressed in macrophages.

The protein resides in the nucleus. Transcription regulator that synchronizes transcriptional and translational programs to promote macrophage invasion of tissues. Required in macrophages for their early invasion into the extended germband. Induces transcriptional expression of metabolic enzymes as well as of the translational regulator pths/DDX47. With pths/DDX47, adjusts transcription and translation of a subset of OXPHOS genes to increase mitochondrial bioenergetics and allow macrophage tissue invasion. This is Protein Atossa from Drosophila melanogaster (Fruit fly).